Consider the following 632-residue polypeptide: Arginine--tRNA ligase (632 aa).

Residues 129 to 139 (ANPVHPLHVGS) carry the 'HIGH' region motif.

It belongs to the class-I aminoacyl-tRNA synthetase family.

It localises to the cytoplasm. The enzyme catalyses tRNA(Arg) + L-arginine + ATP = L-arginyl-tRNA(Arg) + AMP + diphosphate. This is Arginine--tRNA ligase from Korarchaeum cryptofilum (strain OPF8).